Consider the following 267-residue polypeptide: Pyridoxine/pyridoxamine 5'-phosphate oxidase (267 aa).

Residues 20–23 (RQGY) and Lys-80 contribute to the substrate site. FMN contacts are provided by residues 75 to 80 (RTVLLK), 90 to 91 (YT), Arg-96, Lys-97, and Gln-119. 3 residues coordinate substrate: Tyr-137, Arg-141, and Ser-145. FMN-binding positions include 154–155 (QS) and Trp-200. 206–208 (RLH) is a substrate binding site. An FMN-binding site is contributed by Arg-210.

Belongs to the pyridoxamine 5'-phosphate oxidase family. As to quaternary structure, homodimer. Requires FMN as cofactor.

The catalysed reaction is pyridoxamine 5'-phosphate + O2 + H2O = pyridoxal 5'-phosphate + H2O2 + NH4(+). The enzyme catalyses pyridoxine 5'-phosphate + O2 = pyridoxal 5'-phosphate + H2O2. It participates in cofactor metabolism; pyridoxal 5'-phosphate salvage; pyridoxal 5'-phosphate from pyridoxamine 5'-phosphate: step 1/1. The protein operates within cofactor metabolism; pyridoxal 5'-phosphate salvage; pyridoxal 5'-phosphate from pyridoxine 5'-phosphate: step 1/1. Functionally, catalyzes the oxidation of either pyridoxine 5'-phosphate (PNP) or pyridoxamine 5'-phosphate (PMP) into pyridoxal 5'-phosphate (PLP). The sequence is that of Pyridoxine/pyridoxamine 5'-phosphate oxidase from Frankia casuarinae (strain DSM 45818 / CECT 9043 / HFP020203 / CcI3).